The sequence spans 303 residues: Histone deacetylase HDT2 (303 aa).

Residues 100–112 (EMDLDSEDEEEEL) are compositionally biased toward acidic residues. The segment at 100–282 (EMDLDSEDEE…SGGSVPCKSC (183 aa)) is disordered. The segment covering 119-133 (ENGKADGKEEQKNQE) has biased composition (basic and acidic residues). The segment covering 154–203 (DSDDSDEDESDDSDEDDSDDSDEGEGLSPDEGDDDSSDEDDTSDDDEEET) has biased composition (acidic residues). Positions 204–217 (PTPKKPEAGKKRGA) are enriched in basic and acidic residues. The segment at 277-300 (VPCKSCSKTFNSEMALQAHSKAKH) adopts a C2H2-type zinc-finger fold.

It belongs to the histone deacetylase HD2 family. As to quaternary structure, multimer. Possibly forms a homotrimer with HDT1 and/or HDT3.

The protein localises to the nucleus. Its subcellular location is the nucleolus. In terms of biological role, mediates the deacetylation of lysine residues on the N-terminal part of the core histones (H2A, H2B, H3 and H4). Histone deacetylation gives a tag for epigenetic repression and plays an important role in transcriptional regulation, cell cycle progression and developmental events. In Zea mays (Maize), this protein is Histone deacetylase HDT2 (HDT2).